We begin with the raw amino-acid sequence, 1170 residues long: Protein SCAR4 (1170 aa).

Disordered stretches follow at residues 180-207 (KLGK…EDSR), 356-376 (NDAD…SDDK), 631-674 (AAPK…PRDL), 701-742 (SYSG…NQTG), 783-819 (NQRQ…SSPL), 960-980 (EESK…SDTY), and 1026-1046 (HNNP…HPLE). Positions 183 to 195 (KDKRLRQSKKKGS) are enriched in basic residues. Residues 198–207 (TIKETPEDSR) show a composition bias toward basic and acidic residues. A compositionally biased stretch (polar residues) spans 356–365 (NDADSPASTE). The segment covering 366-376 (SEVKEAGSDDK) has biased composition (basic and acidic residues). Polar residues-rich tracts occupy residues 640 to 668 (SQDG…TLMS), 701 to 716 (SYSG…IVSD), 783 to 818 (NQRQ…QSSP), and 967 to 980 (EQSP…SDTY). Residues 1105–1123 (ENDSLLEIIRSKSFNLRPA) form the WH2 domain.

It belongs to the SCAR/WAVE family. In terms of assembly, interacts with SPK1. Expressed in expanding cotyledons, expanding leaves and expanding siliques containing developing embryos. Detected in unopened flower buds and in the expanding tip region of roots. Reduced expression in mature leaves.

It localises to the cytoplasm. The protein resides in the cytoskeleton. Its function is as follows. Involved in regulation of actin and microtubule organization. Part of a WAVE complex that activates the Arp2/3 complex. Regulates trichome branch positioning and expansion. This chain is Protein SCAR4 (SCAR4), found in Arabidopsis thaliana (Mouse-ear cress).